The primary structure comprises 287 residues: Nematocyst expressed protein 6 (287 aa).

Positions 1 to 20 (MKGFIFAGVLVSALICLAEG) are cleaved as a signal peptide. One can recognise a Peptidase M12A domain in the interval 53–249 (RAALRDRYLW…RQTNLMYKCN (197 aa)). Intrachain disulfides connect Cys-95-Cys-248 and Cys-116-Cys-139. His-146 is a binding site for Zn(2+). Glu-147 is an active-site residue. Zn(2+) contacts are provided by His-150 and His-156. The interval 249 to 287 (NAQGDSELQPVNDEDEDKDGGDSKKKPDPKGPKPGEIEE) is disordered. Basic and acidic residues predominate over residues 268–287 (GGDSKKKPDPKGPKPGEIEE).

The cofactor is Zn(2+). As to expression, nematocyte and pharyngeal gland.

It is found in the secreted. The protein resides in the nematocyst. In terms of biological role, metalloprotease. The polypeptide is Nematocyst expressed protein 6 (Nematostella vectensis (Starlet sea anemone)).